The sequence spans 81 residues: Cytotoxin 3b (81 aa).

A signal peptide spans 1 to 21 (MKTLLLTLVVVTIVCLDLGYT). 4 disulfides stabilise this stretch: Cys24–Cys42, Cys35–Cys59, Cys63–Cys74, and Cys75–Cys80.

Belongs to the three-finger toxin family. Short-chain subfamily. Type IA cytotoxin sub-subfamily. As to quaternary structure, monomer in solution; Homodimer and oligomer in the presence of negatively charged lipids forming a pore with a size ranging between 20 and 30 Angstroms. In terms of tissue distribution, expressed by the venom gland.

Its subcellular location is the secreted. The protein resides in the target cell membrane. Functionally, shows cytolytic activity on many different cells by forming pore in lipid membranes. In vivo, increases heart rate or kills the animal by cardiac arrest. In addition, it binds to heparin with high affinity, interacts with Kv channel-interacting protein 1 (KCNIP1) in a calcium-independent manner, and binds to integrin alpha-V/beta-3 (ITGAV/ITGB3) with moderate affinity. The protein is Cytotoxin 3b of Naja atra (Chinese cobra).